A 334-amino-acid polypeptide reads, in one-letter code: NAD-dependent protein deacetylase sirtuin-3 (334 aa).

A Deacetylase sirtuin-type domain is found at 53 to 315 (SSEKKFSLQD…ERLVDLLGWT (263 aa)). Lys57 carries the N6-succinyllysine modification. NAD(+)-binding positions include 80–100 (GAGI…SGLY) and 163–166 (QNID). The active-site Proton acceptor is the His183. Positions 191, 194, 215, and 218 each coordinate Zn(2+). Residues 254–256 (GTS) and 279–281 (NRD) contribute to the NAD(+) site.

Belongs to the sirtuin family. Class I subfamily. As to quaternary structure, upon metabolic stress, forms a complex composed of FOXO3, SIRT3 and mitochondrial RNA polymerase POLRMT; the complex is recruited to mtDNA in a SIRT3-dependent manner. Also forms a complex composed of FOXO3, SIRT3, TFAM and POLRMT. Interacts with NDUFA9, ACSS1, IDH2 and GDH. Interacts with PCCA. Zn(2+) is required as a cofactor. In terms of tissue distribution, expressed in cardiomyocytes (at protein level). Expressed in the brain, liver, kidney and testes. Expressed in skeletal muscles (at protein level).

It is found in the mitochondrion matrix. It localises to the cytoplasm. It carries out the reaction N(6)-acetyl-L-lysyl-[protein] + NAD(+) + H2O = 2''-O-acetyl-ADP-D-ribose + nicotinamide + L-lysyl-[protein]. The enzyme catalyses N(6)-[(S)-lactoyl]-L-lysyl-[protein] + NAD(+) + H2O = 2''-O-(S)-lactoyl-ADP-D-ribose + nicotinamide + L-lysyl-[protein]. NAD-dependent protein deacetylase. Activates or deactivates mitochondrial target proteins by deacetylating key lysine residues. Known targets include ACSS1, IDH, GDH, PDHA1, SOD2, LCAD, SDHA, MRPL12 and the ATP synthase subunit ATP5PO. Contributes to the regulation of the cellular energy metabolism. Important for regulating tissue-specific ATP levels. In response to metabolic stress, deacetylates transcription factor FOXO3 and recruits FOXO3 and mitochondrial RNA polymerase POLRMT to mtDNA to promote mtDNA transcription. Acts as a regulator of ceramide metabolism by mediating deacetylation of ceramide synthases CERS1, CERS2 and CERS6, thereby increasing their activity and promoting mitochondrial ceramide accumulation. Regulates hepatic lipogenesis. Uses NAD(+) substrate imported by SLC25A47, triggering downstream activation of PRKAA1/AMPK-alpha signaling cascade that ultimately downregulates sterol regulatory element-binding protein (SREBP) transcriptional activities and ATP-consuming lipogenesis to restore cellular energy balance. In addition to protein deacetylase activity, also acts as a protein-lysine deacylase by mediating delactylation of proteins, such as CCNE2 and 'Lys-16' of histone H4 (H4K16la). The protein is NAD-dependent protein deacetylase sirtuin-3 of Mus musculus (Mouse).